Here is a 296-residue protein sequence, read N- to C-terminus: Probable lipid kinase YegS-like (296 aa).

Residues 1-130 (MPHTLLILNG…IDLAQVNGEH (130 aa)) enclose the DAGKc domain. ATP-binding positions include T37, 63–69 (GDGTINE), and T92. Residues L212, D215, and L217 each coordinate Mg(2+). E268 acts as the Proton acceptor in catalysis.

This sequence belongs to the diacylglycerol/lipid kinase family. YegS lipid kinase subfamily. Mg(2+) is required as a cofactor. It depends on Ca(2+) as a cofactor.

It is found in the cytoplasm. Its function is as follows. Probably phosphorylates lipids; the in vivo substrate is unknown. This Yersinia pseudotuberculosis serotype I (strain IP32953) protein is Probable lipid kinase YegS-like.